The following is a 592-amino-acid chain: Thiol:disulfide interchange protein DsbD (592 aa).

Residues 1–19 (MKLIASFSIFMLMSIWSFA) form the signal peptide. 2 disulfide bridges follow: cysteine 130/cysteine 136 and cysteine 204/cysteine 326. Transmembrane regions (helical) follow at residues 186–206 (IWVL…PCVF), 229–249 (FVLS…LGLV), 265–285 (IILG…FGAW), 318–338 (ISGL…LLYI), 345–365 (LLGF…LILF), 379–399 (WMNI…LMFV), 406–426 (MATD…FYVM), and 440–460 (ALVI…TIFG). The region spanning 443-592 (IFIGLFASAM…AFAAHAKNIL (150 aa)) is the Thioredoxin domain. Cysteine 508 and cysteine 511 are oxidised to a cystine.

It belongs to the thioredoxin family. DsbD subfamily.

Its subcellular location is the cell inner membrane. The enzyme catalyses [protein]-dithiol + NAD(+) = [protein]-disulfide + NADH + H(+). The catalysed reaction is [protein]-dithiol + NADP(+) = [protein]-disulfide + NADPH + H(+). In terms of biological role, required to facilitate the formation of correct disulfide bonds in some periplasmic proteins and for the assembly of the periplasmic c-type cytochromes. Acts by transferring electrons from cytoplasmic thioredoxin to the periplasm. This transfer involves a cascade of disulfide bond formation and reduction steps. The chain is Thiol:disulfide interchange protein DsbD from Pseudoalteromonas atlantica (strain T6c / ATCC BAA-1087).